We begin with the raw amino-acid sequence, 201 residues long: MSKQALRVGIGGPVGSGKTALTLALCQALREQIDMAVVTNDIYTAEDAKFLVNHSALAPERIIGVETGGCPHTAIREDASINLEAIDRLQRAFPAVELILVESGGDNLAATFSPELSDLTIYVIDVAAGEKIPRKGGPGITKSDLLVINKIDLAPMVGASLEVMAHDAKVQRGERPFVFTNLKTGHGLETIIEFIREKGML.

12–19 contacts GTP; it reads GPVGSGKT.

This sequence belongs to the SIMIBI class G3E GTPase family. UreG subfamily. In terms of assembly, homodimer. UreD, UreF and UreG form a complex that acts as a GTP-hydrolysis-dependent molecular chaperone, activating the urease apoprotein by helping to assemble the nickel containing metallocenter of UreC. The UreE protein probably delivers the nickel.

It localises to the cytoplasm. Functionally, facilitates the functional incorporation of the urease nickel metallocenter. This process requires GTP hydrolysis, probably effectuated by UreG. The polypeptide is Urease accessory protein UreG (Dechloromonas aromatica (strain RCB)).